The chain runs to 615 residues: DNA mismatch repair protein MutL (615 aa).

A disordered region spans residues 363–397 (FAEPAAREPVAPRYTPAPASGSRPAAPWPNAQPGY). The segment covering 364-391 (AEPAAREPVAPRYTPAPASGSRPAAPWP) has biased composition (low complexity).

Belongs to the DNA mismatch repair MutL/HexB family.

In terms of biological role, this protein is involved in the repair of mismatches in DNA. It is required for dam-dependent methyl-directed DNA mismatch repair. May act as a 'molecular matchmaker', a protein that promotes the formation of a stable complex between two or more DNA-binding proteins in an ATP-dependent manner without itself being part of a final effector complex. The sequence is that of DNA mismatch repair protein MutL from Escherichia coli (strain K12 / MC4100 / BW2952).